A 214-amino-acid chain; its full sequence is Cytochrome b (214 aa).

The next 4 helical transmembrane spans lie at 31–51 (FGSM…FLAI), 75–96 (WIMQ…YIHI), 111–131 (WLSG…GYVL), and 176–196 (FFAL…AHIL). The heme b site is built by Xaa81 and His95. Residues His180 and His194 each coordinate heme b. His199 contributes to the a ubiquinone binding site.

The protein belongs to the cytochrome b family. As to quaternary structure, the cytochrome bc1 complex contains 3 respiratory subunits (MT-CYB, CYC1 and UQCRFS1), 2 core proteins (UQCRC1 and UQCRC2) and probably 6 low-molecular weight proteins. It depends on heme b as a cofactor.

It is found in the mitochondrion inner membrane. Its function is as follows. Component of the ubiquinol-cytochrome c reductase complex (complex III or cytochrome b-c1 complex) that is part of the mitochondrial respiratory chain. The b-c1 complex mediates electron transfer from ubiquinol to cytochrome c. Contributes to the generation of a proton gradient across the mitochondrial membrane that is then used for ATP synthesis. The chain is Cytochrome b (MT-CYB) from Bothriechis schlegelii (Eyelash palm pitviper).